Reading from the N-terminus, the 75-residue chain is RNA-binding protein KhpA (75 aa).

The 47-residue stretch at 29-75 folds into the KH domain; sequence KKVYEIVVNEEDVGQVIGKDGRTIKSLKILLSALMGDSKEITIKVVR.

Belongs to the KhpA RNA-binding protein family. As to quaternary structure, forms a complex with KhpB.

The protein resides in the cytoplasm. In terms of biological role, a probable RNA chaperone. Forms a complex with KhpB which binds to cellular RNA and controls its expression. Plays a role in peptidoglycan (PG) homeostasis and cell length regulation. The chain is RNA-binding protein KhpA from Thermotoga maritima (strain ATCC 43589 / DSM 3109 / JCM 10099 / NBRC 100826 / MSB8).